A 156-amino-acid chain; its full sequence is Ribosomal RNA large subunit methyltransferase H (156 aa).

Residues leucine 73, glycine 104, and 123 to 128 each bind S-adenosyl-L-methionine; that span reads LSALTL.

Belongs to the RNA methyltransferase RlmH family. Homodimer.

It localises to the cytoplasm. It catalyses the reaction pseudouridine(1915) in 23S rRNA + S-adenosyl-L-methionine = N(3)-methylpseudouridine(1915) in 23S rRNA + S-adenosyl-L-homocysteine + H(+). In terms of biological role, specifically methylates the pseudouridine at position 1915 (m3Psi1915) in 23S rRNA. The sequence is that of Ribosomal RNA large subunit methyltransferase H from Psychromonas ingrahamii (strain DSM 17664 / CCUG 51855 / 37).